Consider the following 808-residue polypeptide: N-terminal kinase-like protein (808 aa).

The Protein kinase domain maps to 14 to 314 (FELIPEPPEG…PEDFCRHKVL (301 aa)). HEAT repeat units lie at residues 350–388 (IIPV…VNTQ), 389–427 (IFPH…LNVE), and 507–545 (ILPV…EDPT). Disordered stretches follow at residues 540–566 (VSED…GGAA), 587–646 (SHPT…RWDD), and 658–808 (SVLA…RKLD). Over residues 556–566 (AASSPGMGGAA) the composition is skewed to low complexity. Over residues 587–600 (SHPTTAPTETNIPQ) the composition is skewed to polar residues. Positions 601-617 (RPTPEGVPAPAPTPVPA) are enriched in pro residues. Residues 660–680 (LAQQDDWSTGGQVSRASQVSN) are compositionally biased toward polar residues. A compositionally biased stretch (basic and acidic residues) spans 681–690 (SDHKSSKSPE). Position 754 is a phosphoserine (serine 754). The segment covering 755 to 764 (WGEDNWEGLE) has biased composition (acidic residues). The stretch at 761-797 (EGLETDSRQVKAELARKKREERRREMEAKRAERKVAK) forms a coiled coil. 2 stretches are compositionally biased toward basic and acidic residues: residues 765–775 (TDSRQVKAELA) and 782–795 (RRRE…ERKV). Positions 793–808 (RKVAKGPMKLGARKLD) are interaction with COPB1.

The protein belongs to the protein kinase superfamily. In terms of assembly, interacts with GORAB. Interacts with COPA, COPB1 and COPB2. Homooligomer. Interacts with AP2B1. In terms of tissue distribution, ubiquitous.

The protein resides in the cytoplasm. Its subcellular location is the cytoskeleton. It localises to the microtubule organizing center. The protein localises to the centrosome. It is found in the endoplasmic reticulum-Golgi intermediate compartment. The protein resides in the golgi apparatus. Its subcellular location is the cis-Golgi network. It localises to the nucleus. Functionally, regulates COPI-mediated retrograde protein traffic at the interface between the Golgi apparatus and the endoplasmic reticulum. Involved in the maintenance of the Golgi apparatus morphology. Acts as a transcriptional activator. It binds to three different types of GC-rich DNA binding sites (box-A, -B and -C) in the beta-polymerase promoter region. It also binds to the TERT promoter region. The sequence is that of N-terminal kinase-like protein (SCYL1) from Homo sapiens (Human).